The sequence spans 1672 residues: Probable outer membrane protein PmpB (1672 aa).

The N-terminal stretch at 1–14 (MSSMKWLSATAVFA) is a signal peptide. 4 disordered regions span residues 69–122 (IPVK…GGAF), 203–263 (NTAE…GSGG), 384–415 (EAQTNKSSVTAASQSGPNTTPTPTPPVTAKGG), and 734–765 (STGVATTATTSQSPTVSSFLPRATAGSSPAPA). Composition is skewed to low complexity over residues 77-88 (DDSSTSTPTTSS), 100-111 (SSSSSPNSGDTS), and 203-234 (NTAEVVPEETTPNPNPGTQTTTSQPSPTSKVQ). Composition is skewed to polar residues over residues 235–256 (SLFTYSSSTQANGNGADSQTPS) and 384–399 (EAQTNKSSVTAASQSG). Positions 734–744 (STGVATTATTS) are enriched in low complexity. The Autotransporter domain maps to 1379–1672 (DDAAYNNFWV…MTSCGARMIF (294 aa)).

Belongs to the PMP outer membrane protein family.

It is found in the secreted. The protein resides in the cell wall. Its subcellular location is the cell outer membrane. This is Probable outer membrane protein PmpB (pmpB) from Chlamydia muridarum (strain MoPn / Nigg).